The primary structure comprises 817 residues: Actin filament-associated protein 1-like 2 (817 aa).

A Phosphotyrosine modification is found at Tyr56. Residues 63–164 (HKQQNAESQD…KGKSAPHQWP (102 aa)) form a disordered region. The segment covering 123-139 (YYEEAEPYDTSLNEDGE) has biased composition (acidic residues). 2 consecutive PH domains span residues 175-271 (DARI…EVSG) and 353-447 (SLET…SESG). Residue Ser408 is modified to Phosphoserine. Position 413 is a phosphotyrosine (Tyr413). Ser484 bears the Phosphoserine mark. The segment covering 512 to 528 (TTAGEAPEEATPATDAP) has biased composition (low complexity). Disordered stretches follow at residues 512-657 (TTAG…KLGK) and 754-786 (GTTVDTTHLESVSPRPKAATPTPAPDCTPVNSA). Residues 652-748 (EIKLGKNRTE…VKDSLRKAEA (97 aa)) adopt a coiled-coil conformation. Residues 754–763 (GTTVDTTHLE) are compositionally biased toward polar residues. Low complexity predominate over residues 767-782 (PRPKAATPTPAPDCTP).

In terms of assembly, interacts with SRC. Interacts with LCK when tyrosine phosphorylated. Tyrosine phosphorylated (by SRC).

It is found in the cytoplasm. Functionally, may play a role in a signaling cascade by enhancing the kinase activity of SRC. Contributes to SRC-regulated transcription activation. The chain is Actin filament-associated protein 1-like 2 (AFAP1L2) from Bos taurus (Bovine).